Here is a 259-residue protein sequence, read N- to C-terminus: MSQIHPTALISPSATIDETATIGPYCIVGDEVTIGAHTVLHRHVVVTRLTRIGEHNQFYQFSSIGEDPQDLKYAGERTWLEIGDHNTIREACSLHRGTEQDGGLTKIGSHNLLMVNTHVAHDCLIGDHNVLANNVGVAGHVTIGNHIIVGGNSGIHQFCTIDDYSLVGGATLVLKDVAAFTMVSGNPAKAHGLNVEGMRRKGWSKDSIDVLRQAYRVVFRSGLTTVQALEVLKQDLLPKEQKIEFLIDSLQKSRRGVVR.

Belongs to the transferase hexapeptide repeat family. LpxA subfamily. In terms of assembly, homotrimer.

The protein localises to the cytoplasm. It catalyses the reaction a (3R)-hydroxyacyl-[ACP] + UDP-N-acetyl-alpha-D-glucosamine = a UDP-3-O-[(3R)-3-hydroxyacyl]-N-acetyl-alpha-D-glucosamine + holo-[ACP]. It participates in glycolipid biosynthesis; lipid IV(A) biosynthesis; lipid IV(A) from (3R)-3-hydroxytetradecanoyl-[acyl-carrier-protein] and UDP-N-acetyl-alpha-D-glucosamine: step 1/6. Its function is as follows. Involved in the biosynthesis of lipid A, a phosphorylated glycolipid that anchors the lipopolysaccharide to the outer membrane of the cell. In Psychrobacter arcticus (strain DSM 17307 / VKM B-2377 / 273-4), this protein is Acyl-[acyl-carrier-protein]--UDP-N-acetylglucosamine O-acyltransferase.